The sequence spans 578 residues: tRNA (guanine(26)-N(2))-dimethyltransferase (578 aa).

The Trm1 methyltransferase domain maps to 18–451 (NVIRERNAEI…APPAVLWDIL (434 aa)). S-adenosyl-L-methionine is bound at residue arginine 43. Residues 63-92 (EKALKKQRKKVKEQEDEKTTPVPEDPPVYE) form a disordered region. 2 residues coordinate S-adenosyl-L-methionine: arginine 113 and aspartate 131. Residues cysteine 295, cysteine 298, cysteine 335, and cysteine 338 each contribute to the Zn(2+) site. The tract at residues 491-578 (EANPKSRKSA…PKQPKLEATA (88 aa)) is disordered. Over residues 564-578 (DVEHLPKQPKLEATA) the composition is skewed to basic and acidic residues.

The protein belongs to the class I-like SAM-binding methyltransferase superfamily. Trm1 family.

It carries out the reaction guanosine(26) in tRNA + 2 S-adenosyl-L-methionine = N(2)-dimethylguanosine(26) in tRNA + 2 S-adenosyl-L-homocysteine + 2 H(+). In terms of biological role, dimethylates a single guanine residue at position 26 of most tRNAs using S-adenosyl-L-methionine as donor of the methyl groups. This Drosophila melanogaster (Fruit fly) protein is tRNA (guanine(26)-N(2))-dimethyltransferase.